Reading from the N-terminus, the 161-residue chain is Phosphopantetheine adenylyltransferase (161 aa).

T10 lines the substrate pocket. ATP contacts are provided by residues 10 to 11 (TF) and H18. Substrate contacts are provided by K42, M74, and R88. ATP-binding positions include 89–91 (GVR), E99, and 124–130 (LSFVSSS).

Belongs to the bacterial CoaD family. In terms of assembly, homohexamer. Requires Mg(2+) as cofactor.

It localises to the cytoplasm. The enzyme catalyses (R)-4'-phosphopantetheine + ATP + H(+) = 3'-dephospho-CoA + diphosphate. The protein operates within cofactor biosynthesis; coenzyme A biosynthesis; CoA from (R)-pantothenate: step 4/5. In terms of biological role, reversibly transfers an adenylyl group from ATP to 4'-phosphopantetheine, yielding dephospho-CoA (dPCoA) and pyrophosphate. This chain is Phosphopantetheine adenylyltransferase, found in Proteus mirabilis (strain HI4320).